The chain runs to 107 residues: ATP-dependent Clp protease adapter protein ClpS (107 aa).

Positions 1–20 (MAQKHEHDTSVITESAPKQK) are disordered.

Belongs to the ClpS family. In terms of assembly, binds to the N-terminal domain of the chaperone ClpA.

In terms of biological role, involved in the modulation of the specificity of the ClpAP-mediated ATP-dependent protein degradation. The sequence is that of ATP-dependent Clp protease adapter protein ClpS from Myxococcus xanthus (strain DK1622).